The following is a 601-amino-acid chain: Probable protein arginine N-methyltransferase 3 (601 aa).

The span at 1 to 10 shows a compositional bias: basic and acidic residues; it reads MAATMVKHEI. The interval 1 to 50 is disordered; it reads MAATMVKHEILNYSEDEEENYSDEGDWGDWKADDNGIEGGEEEEEDDGDD. Composition is skewed to acidic residues over residues 14–27 and 35–50; these read SEDE…EGDW and NGIE…DGDD. Residues 57-78 form a C2H2-type zinc finger; that stretch reads CLFCDSHFVSCDLLFEHCRLSH. The 313-residue stretch at 242–554 folds into the SAM-dependent MTase PRMT-type domain; sequence NENYFGSYSS…NDRREAIGTE (313 aa). Residues Arg-264, Gly-288, Glu-310, Ser-312, Val-345, and Glu-346 each contribute to the S-adenosyl-L-homocysteine site. Active-site residues include Glu-365 and Glu-374.

This sequence belongs to the class I-like SAM-binding methyltransferase superfamily. Protein arginine N-methyltransferase family.

Its subcellular location is the cytoplasm. The protein localises to the cytosol. It catalyses the reaction L-arginyl-[protein] + S-adenosyl-L-methionine = N(omega)-methyl-L-arginyl-[protein] + S-adenosyl-L-homocysteine + H(+). The catalysed reaction is L-arginyl-[protein] + 2 S-adenosyl-L-methionine = N(omega),N(omega)-dimethyl-L-arginyl-[protein] + 2 S-adenosyl-L-homocysteine + 2 H(+). Functionally, protein-arginine N-methyltransferase that catalyzes both the monomethylation and asymmetric dimethylation of the guanidino nitrogens of arginine residues in target proteins, and therefore falls into the group of type I methyltransferases. The protein is Probable protein arginine N-methyltransferase 3 (PRMT3) of Arabidopsis thaliana (Mouse-ear cress).